Consider the following 382-residue polypeptide: Apolipoprotein A-IV (382 aa).

Positions 1-20 (MFLKAVVLTLSLVAVTGAQA) are cleaved as a signal peptide. 13 tandem repeats follow at residues 33–54 (DYFS…KSEL), 60–81 (ALFQ…KKLV), 82–103 (PFAT…EEIR), 115–136 (PHAD…QRLG), 137–158 (PYAE…NQLT), 159–180 (AHAQ…ASLT), 181–202 (PYAD…GHLT), 203–224 (PYAD…RSLA), 225–246 (PYAQ…FQMK), 247–268 (KNAE…QKLV), 269–286 (PVAE…EELQ), 287–308 (KSLA…RNVG), and 309–330 (PYGE…QKLG). The segment at 33-330 (DYFSQLSNNA…QVEELRQKLG (298 aa)) is 13 X 22 AA approximate tandem repeats.

Belongs to the apolipoprotein A1/A4/E family. In terms of assembly, homodimer. Phosphorylation sites are present in the extracellular medium.

Its subcellular location is the secreted. May have a role in chylomicrons and VLDL secretion and catabolism. Required for efficient activation of lipoprotein lipase by ApoC-II; potent activator of LCAT. Apoa-IV is a major component of HDL and chylomicrons. This Neomonachus schauinslandi (Hawaiian monk seal) protein is Apolipoprotein A-IV (APOA4).